The chain runs to 1126 residues: Stress response protein nst1 (1126 aa).

Residues 1–17 (MSTAAPAASATNSAIPA) are compositionally biased toward low complexity. Disordered stretches follow at residues 1–192 (MSTA…STQE), 266–348 (NQGS…ARAA), 404–453 (AAHQ…EQRM), 492–774 (LLEE…NGLP), 823–914 (NGAR…AQRD), 939–965 (LSQS…GPSL), and 1075–1126 (FEPD…PMGF). Residues 35–45 (NRKKQKRRQKQ) show a composition bias toward basic residues. The segment covering 96–111 (ANHKDDQDSVDAHDDY) has biased composition (basic and acidic residues). Basic residues predominate over residues 125–136 (TGRKSKKKKGKK). Positions 291–300 (GQHTRTQGQF) are enriched in polar residues. 2 stretches are compositionally biased toward acidic residues: residues 311 to 344 (PEEE…EDDE) and 419 to 448 (DEED…DTMT). Residues 479 to 655 (KVAEQRQQKL…KREYQAKRTS (177 aa)) adopt a coiled-coil conformation. 2 stretches are compositionally biased toward basic and acidic residues: residues 492–512 (LLEE…EAQK) and 522–651 (QAKE…EYQA). Polar residues-rich tracts occupy residues 655–670 (SPFS…SSPV) and 694–721 (QPSQ…SVSP). The segment covering 727–737 (SQSSGASSVAS) has biased composition (low complexity). Polar residues-rich tracts occupy residues 846-860 (GQQQ…QQSG) and 867-885 (RQPS…TQPM). Over residues 886 to 898 (PISRPSPIKRPSS) the composition is skewed to low complexity. Over residues 902 to 914 (DQRKNGDRTAQRD) the composition is skewed to basic and acidic residues. Residues 1115–1126 (VLRQFSSPPMGF) show a composition bias toward polar residues.

It belongs to the NST1 family.

It is found in the cytoplasm. Functionally, may act as a negative regulator of salt tolerance. This is Stress response protein nst1 (nst1) from Aspergillus clavatus (strain ATCC 1007 / CBS 513.65 / DSM 816 / NCTC 3887 / NRRL 1 / QM 1276 / 107).